Consider the following 335-residue polypeptide: Glyceraldehyde-3-phosphate dehydrogenase (335 aa).

Residues 13–14 and G111 contribute to the NAD(+) site; that span reads TI. Residue 140 to 142 participates in D-glyceraldehyde 3-phosphate binding; the sequence is SCN. The Nucleophile role is filled by C141. R169 serves as a coordination point for NAD(+). D-glyceraldehyde 3-phosphate contacts are provided by residues T171 and 195–196; that span reads HG. Residue Q300 participates in NAD(+) binding.

The protein belongs to the glyceraldehyde-3-phosphate dehydrogenase family. Homotetramer.

It localises to the cytoplasm. It carries out the reaction D-glyceraldehyde 3-phosphate + phosphate + NADP(+) = (2R)-3-phospho-glyceroyl phosphate + NADPH + H(+). It catalyses the reaction D-glyceraldehyde 3-phosphate + phosphate + NAD(+) = (2R)-3-phospho-glyceroyl phosphate + NADH + H(+). Its pathway is carbohydrate degradation; glycolysis; pyruvate from D-glyceraldehyde 3-phosphate: step 1/5. The protein is Glyceraldehyde-3-phosphate dehydrogenase of Methanosarcina mazei (strain ATCC BAA-159 / DSM 3647 / Goe1 / Go1 / JCM 11833 / OCM 88) (Methanosarcina frisia).